Here is a 1239-residue protein sequence, read N- to C-terminus: Inner tegument protein (1239 aa).

4 disordered regions span residues 1–20 (MASA…DAQP), 669–704 (GESP…GGGP), 959–980 (RPPP…DTPP), and 1087–1239 (GRNA…AEDE). The interval 615–1239 (NELPKTRSLA…RPPRPTAEDE (625 aa)) is interaction with large tegument protein. Positions 1112–1123 (DSSPFSFSSSDF) are enriched in low complexity. A compositionally biased stretch (gly residues) spans 1139-1148 (VPGGGGGGEG). The span at 1151–1170 (EEERERPSDIDTAARARKVE) shows a compositional bias: basic and acidic residues. Over residues 1180 to 1189 (RTTPSPSRRA) the composition is skewed to low complexity. The span at 1219–1232 (VRPRTRRGATRRPP) shows a compositional bias: basic residues.

The protein belongs to the herpesviridae inner tegument protein family. In terms of assembly, interacts (via C-terminus) with the large tegument protein/LTP (via N-terminus).

The protein resides in the virion tegument. The protein localises to the host cytoplasm. It localises to the host nucleus. It is found in the host Golgi apparatus. Its subcellular location is the host trans-Golgi network. In terms of biological role, plays an essential role in cytoplasmic secondary envelopment during viral egress. Interacts with the capsid via the large tegument protein/LTP and participates in its transport to the host trans-Golgi network (TGN) where secondary envelopment occurs. Modulates tegumentation and capsid accumulation at the viral assembly complex. The protein is Inner tegument protein of Homo sapiens (Human).